The chain runs to 361 residues: UDP-3-O-acylglucosamine N-acyltransferase (361 aa).

The active-site Proton acceptor is His-258.

It belongs to the transferase hexapeptide repeat family. LpxD subfamily. As to quaternary structure, homotrimer.

The catalysed reaction is a UDP-3-O-[(3R)-3-hydroxyacyl]-alpha-D-glucosamine + a (3R)-hydroxyacyl-[ACP] = a UDP-2-N,3-O-bis[(3R)-3-hydroxyacyl]-alpha-D-glucosamine + holo-[ACP] + H(+). The protein operates within bacterial outer membrane biogenesis; LPS lipid A biosynthesis. In terms of biological role, catalyzes the N-acylation of UDP-3-O-acylglucosamine using 3-hydroxyacyl-ACP as the acyl donor. Is involved in the biosynthesis of lipid A, a phosphorylated glycolipid that anchors the lipopolysaccharide to the outer membrane of the cell. The protein is UDP-3-O-acylglucosamine N-acyltransferase of Nitrobacter hamburgensis (strain DSM 10229 / NCIMB 13809 / X14).